The primary structure comprises 307 residues: MTKTIGLLVMAYGTPYKESDIEAYYTDIRHGKKPTEAELQDLKDRYQFIGGLSPLAGTTNRQAESLRDALNQAYDDVEFKLYIGLKHIHPFIEDAVQSMHEDGIDEAVTVVLAPHYSSFSVGSYNTRAQKEADKYGITFKHVEHYYQQPKFIQYWTEKINETLADIPQDEHDKTVLVVSAHSLPKGLIEKNNDPYPNELHETAQLLEQHSNIIHVAEGWQSEGNTGTPWLGPDVQDLTRALYNEHKYEHFIYTPVGFVCEHLEVLYDNDYECKVICDELGVHYHRPKMPDTDPLFIGAIVEEIKNVY.

Residues Y12, R29, R45 to Y46, S53, and Y124 contribute to the Fe-coproporphyrin III site. H181 and E263 together coordinate Fe(2+).

Belongs to the ferrochelatase family.

Its subcellular location is the cytoplasm. It catalyses the reaction Fe-coproporphyrin III + 2 H(+) = coproporphyrin III + Fe(2+). It functions in the pathway porphyrin-containing compound metabolism; protoheme biosynthesis. Its function is as follows. Involved in coproporphyrin-dependent heme b biosynthesis. Catalyzes the insertion of ferrous iron into coproporphyrin III to form Fe-coproporphyrin III. This chain is Coproporphyrin III ferrochelatase, found in Staphylococcus saprophyticus subsp. saprophyticus (strain ATCC 15305 / DSM 20229 / NCIMB 8711 / NCTC 7292 / S-41).